The chain runs to 464 residues: Glutamate--tRNA ligase (464 aa).

A 'HIGH' region motif is present at residues 9–19 (PSPTGYLHIGG). The short motif at 242–246 (KISKR) is the 'KMSKS' region element. ATP is bound at residue lysine 245.

This sequence belongs to the class-I aminoacyl-tRNA synthetase family. Glutamate--tRNA ligase type 1 subfamily. In terms of assembly, monomer.

The protein resides in the cytoplasm. It carries out the reaction tRNA(Glu) + L-glutamate + ATP = L-glutamyl-tRNA(Glu) + AMP + diphosphate. Catalyzes the attachment of glutamate to tRNA(Glu) in a two-step reaction: glutamate is first activated by ATP to form Glu-AMP and then transferred to the acceptor end of tRNA(Glu). This Neisseria gonorrhoeae (strain NCCP11945) protein is Glutamate--tRNA ligase.